Reading from the N-terminus, the 202-residue chain is Cilia- and flagella-associated protein 418 (202 aa).

The disordered stretch occupies residues 71–90 (DVDTPTSTHEPSPAKASSSA). Over residues 74 to 90 (TPTSTHEPSPAKASSSA) the composition is skewed to polar residues.

In terms of tissue distribution, ubiquitously expressed during early development and in adult tissues including the eye, brain, heart and kidney.

The protein resides in the cytoplasm. The protein localises to the photoreceptor inner segment. May be involved in photoreceptor outer segment disk morphogenesis. In Danio rerio (Zebrafish), this protein is Cilia- and flagella-associated protein 418 (cfap418).